We begin with the raw amino-acid sequence, 272 residues long: uncharacterized protein (272 aa).

The HTH merR-type domain maps to 1-27; sequence MDTLAFINRALVEEGYSLKDIKLVLIT.

This is an uncharacterized protein from Aquifex aeolicus (strain VF5).